The following is a 497-amino-acid chain: 4,4'-diaponeurosporene oxygenase (497 aa).

7-19 (VIGGGLGGISAAI) contacts FAD.

This sequence belongs to the carotenoid/retinoid oxidoreductase family. CrtP subfamily. FAD serves as cofactor.

It carries out the reaction all-trans-4,4'-diaponeurosporene + 2 AH2 + 2 O2 = 4,4'-diaponeurosporenal + 2 A + 3 H2O. It participates in carotenoid biosynthesis; staphyloxanthin biosynthesis; staphyloxanthin from farnesyl diphosphate: step 3/5. Functionally, involved in the biosynthesis of the yellow-orange carotenoid staphyloxanthin, which plays a role in the virulence via its protective function against oxidative stress. Catalyzes the oxidation of the terminal methyl side group of 4,4'-diaponeurosporene to form 4,4'-diaponeurosporen-4-al. This Staphylococcus aureus (strain MRSA252) protein is 4,4'-diaponeurosporene oxygenase.